Reading from the N-terminus, the 92-residue chain is Small ribosomal subunit protein uS19 (92 aa).

This sequence belongs to the universal ribosomal protein uS19 family.

Functionally, protein S19 forms a complex with S13 that binds strongly to the 16S ribosomal RNA. This chain is Small ribosomal subunit protein uS19, found in Lachnoclostridium phytofermentans (strain ATCC 700394 / DSM 18823 / ISDg) (Clostridium phytofermentans).